Consider the following 595-residue polypeptide: Proline--tRNA ligase (595 aa).

Residues 1–22 (MKMSTMFGATLHTAPGRSESEG) form a disordered region.

The protein belongs to the class-II aminoacyl-tRNA synthetase family. ProS type 1 subfamily. As to quaternary structure, homodimer.

It localises to the cytoplasm. It carries out the reaction tRNA(Pro) + L-proline + ATP = L-prolyl-tRNA(Pro) + AMP + diphosphate. Catalyzes the attachment of proline to tRNA(Pro) in a two-step reaction: proline is first activated by ATP to form Pro-AMP and then transferred to the acceptor end of tRNA(Pro). As ProRS can inadvertently accommodate and process non-cognate amino acids such as alanine and cysteine, to avoid such errors it has two additional distinct editing activities against alanine. One activity is designated as 'pretransfer' editing and involves the tRNA(Pro)-independent hydrolysis of activated Ala-AMP. The other activity is designated 'posttransfer' editing and involves deacylation of mischarged Ala-tRNA(Pro). The misacylated Cys-tRNA(Pro) is not edited by ProRS. This chain is Proline--tRNA ligase, found in Salinispora tropica (strain ATCC BAA-916 / DSM 44818 / JCM 13857 / NBRC 105044 / CNB-440).